Reading from the N-terminus, the 1471-residue chain is ABC multidrug transporter F (1471 aa).

A compositionally biased stretch (polar residues) spans 1 to 19; it reads MALNSTDNRWSTGEDTPSE. Positions 1 to 40 are disordered; that stretch reads MALNSTDNRWSTGEDTPSEAQLPDGEERLDAAPDEKVTAE. Asn-4 carries N-linked (GlcNAc...) asparagine glycosylation. Positions 25 to 40 are enriched in basic and acidic residues; that stretch reads GEERLDAAPDEKVTAE. 2 N-linked (GlcNAc...) asparagine glycosylation sites follow: Asn-71 and Asn-311. In terms of domain architecture, ABC transporter 1 spans 133–387; the sequence is LKVPTMVRQA…FEQLGFQCPE (255 aa). Residues 498 to 518 form a helical membrane-spanning segment; it reads VTLAMLIGNFFEALIIASIFY. Asn-519 carries an N-linked (GlcNAc...) asparagine glycan. The next 5 membrane-spanning stretches (helical) occupy residues 532-552, 578-598, 607-627, 641-661, and 751-771; these read ALLF…ILTL, FIMS…TLYF, GPFF…SMFF, LAPS…TIPV, and IIIA…ELVA. A disordered region spans residues 791-819; sequence RAKQGQRDEEQPSASAVPSEKYSEAPTPV. One can recognise an ABC transporter 2 domain in the interval 829–1071; that stretch reads FHWEDVCYDV…TLMDYFVRNG (243 aa). Asn-842 is a glycosylation site (N-linked (GlcNAc...) asparagine). Residue 865–872 participates in ATP binding; that stretch reads GVSGAGKT. The next 5 helical transmembrane spans lie at 1167–1187, 1201–1221, 1252–1272, 1288–1308, and 1326–1346; these read YLYS…FSFF, FGVF…IPTF, FAWN…PVGL, LVFL…HLLI, and IMMY…GFWI. N-linked (GlcNAc...) asparagine glycans are attached at residues Asn-1386, Asn-1422, and Asn-1429. Residues 1441–1461 form a helical membrane-spanning segment; it reads FGLLWVYVAVNTFGAVFLYWL.

The protein belongs to the ABC transporter superfamily. ABCG family. PDR (TC 3.A.1.205) subfamily.

It is found in the cell membrane. It carries out the reaction fluconazole(in) + ATP + H2O = fluconazole(out) + ADP + phosphate + H(+). The enzyme catalyses itraconazole(in) + ATP + H2O = itraconazole(out) + ADP + phosphate + H(+). Its activity is regulated as follows. The efflux inhibitor FK506 impairs the transport activity. Functionally, pleiotropic ABC efflux transporter that shows a strong substrate specificity for the azole class of drugs such as lotrimazole (CLT), fluconazole (FLC), itraconazole (ITC), ketoconazole (KTC), posaconazole (POS), econazole (ECON), metconazole (MET), miconazole (MCZ), prochloraz (PCLZ), and tebuconazole (TEBZ). The chain is ABC multidrug transporter F from Aspergillus fumigatus (strain ATCC MYA-4609 / CBS 101355 / FGSC A1100 / Af293) (Neosartorya fumigata).